A 11103-amino-acid chain; its full sequence is Colossin-A (11103 aa).

An N-terminal signal peptide occupies residues 1 to 35 (MGTIKTKFKNNYLKNSYLFIIYIILFNLVIGIANS). Asn95, Asn120, Asn137, and Asn198 each carry an N-linked (GlcNAc...) asparagine glycan. The Kelch 1 repeat unit spans residues 273–324 (NLFAVGNYVFFDVNRDGVHETTELFAPNVKVELYDAISSTRLIASTFTDLNG). Positions 298-359 (APNVKVELYD…SNGPDNVINA (62 aa)) constitute a CNA-B 1 domain. Asn372, Asn386, and Asn422 each carry an N-linked (GlcNAc...) asparagine glycan. Positions 423-469 (LSGITVQLTTPSHVVLKTAQTDYAGNYVFDDLSEGVYSVHFILPENY) constitute a CNA-B 2 domain. An N-linked (GlcNAc...) asparagine glycan is attached at Asn493. 6 consecutive CNA-B domains span residues 551–599 (LPGV…PDGY), 676–745 (VANV…INLT), 803–871 (APFV…FTLN), 931–999 (AEGV…IDLS), 1057–1095 (LPNI…EGDY), and 1170–1231 (LSNT…FNSS). An N-linked (GlcNAc...) asparagine glycan is attached at Asn678. Asn1059, Asn1229, and Asn1239 each carry an N-linked (GlcNAc...) asparagine glycan. Residues 1277–1314 (ISNIPLSLISQKTNQIISSVVTDSNGKYQFEDVPPGDY) form the CNA-B 9 domain. N-linked (GlcNAc...) asparagine glycosylation occurs at Asn1329. 8 consecutive CNA-B domains span residues 1391–1458 (SDVS…FKLT), 1494–1530 (LPGV…PGDY), 1602–1651 (LPGV…YKQV), 1708–1779 (LSDI…VTVK), 1824–1891 (SDVS…FKLT), 1927–1963 (LPGV…PGDY), 2035–2086 (LPGV…QVAQ), and 2141–2177 (VEGI…PGDY). N-linked (GlcNAc...) asparagine glycosylation occurs at Asn1613. Positions 1716–1740 (TDKDGNEISNTKSGPDGKYQFEDVP) are disordered. Asn1759 and Asn1772 each carry an N-linked (GlcNAc...) asparagine glycan. Asn2046 is a glycosylation site (N-linked (GlcNAc...) asparagine). Residues Asn2192 and Asn2311 are each glycosylated (N-linked (GlcNAc...) asparagine). 8 CNA-B domains span residues 2254 to 2321 (SDVS…FKLT), 2357 to 2402 (LPGV…TPIG), 2465 to 2514 (LPGV…YKQV), 2571 to 2640 (LSDI…NFVT), 2687 to 2754 (SDVS…FKLT), 2790 to 2835 (LPGV…TPIG), 2898 to 2947 (LPGV…YKQV), and 3004 to 3040 (LEGI…PGDY). Asn2476 carries an N-linked (GlcNAc...) asparagine glycan. The interval 2580–2603 (DKDGNEITNTKSGPDGKYQFEDVP) is disordered. A glycan (N-linked (GlcNAc...) asparagine) is linked at Asn2622. Asn2801 and Asn2909 each carry an N-linked (GlcNAc...) asparagine glycan. N-linked (GlcNAc...) asparagine glycans are attached at residues Asn3048, Asn3055, and Asn3118. CNA-B domains follow at residues 3117-3184 (SNVS…FKLT), 3220-3256 (LPGV…PGDY), 3328-3364 (LPGV…PGSY), and 3434-3470 (VEGI…PGDY). Asn3339 carries an N-linked (GlcNAc...) asparagine glycan. Residue Asn3485 is glycosylated (N-linked (GlcNAc...) asparagine). The stretch at 3503-3549 (SCFAVSGPLDNQNLGLSLFYEIGTMVWIDSNNNGKFEQPSDVLKSDV) is one Kelch 2 repeat. 3 CNA-B domains span residues 3547–3614 (SDVS…FKLT), 3650–3686 (LPGV…PGDY), and 3758–3809 (LPGV…QVAQ). N-linked (GlcNAc...) asparagine glycosylation is found at Asn3769 and Asn3827. A CNA-B 33 domain is found at 3864–3900 (LSDITIRLTDKDGKVIQSTTSGPDGKYQFEDVPPGDY). An N-linked (GlcNAc...) asparagine glycan is attached at Asn3915. CNA-B domains lie at 3980-4047 (SDVS…FKLT), 4083-4128 (LPGV…TPIG), 4191-4240 (LPGV…YKQV), 4297-4378 (LSDI…NFVT), 4425-4492 (SDVS…FKLT), 4528-4573 (LPGV…TPIG), 4636-4685 (LPGV…YKQV), and 4742-4778 (VEGI…PGDY). An N-linked (GlcNAc...) asparagine glycan is attached at Asn4202. The tract at residues 4286 to 4341 (NTGKQTDDSPPLSDITIRLTDKDGNEITKTKSRPDGNENSNTKSGPDGKYQFEDVP) is disordered. Over residues 4304–4321 (LTDKDGNEITKTKSRPDG) the composition is skewed to basic and acidic residues. N-linked (GlcNAc...) asparagine glycosylation occurs at Asn4360. The N-linked (GlcNAc...) asparagine glycan is linked to Asn4647. N-linked (GlcNAc...) asparagine glycosylation is found at Asn4792 and Asn4918. CNA-B domains are found at residues 4865 to 4928 (ITLT…FKLT), 4964 to 5009 (LPGV…TPIG), 5072 to 5123 (LPGV…QVAQ), and 5178 to 5214 (LEGI…PGDY). Asn5083 carries an N-linked (GlcNAc...) asparagine glycan. 3 N-linked (GlcNAc...) asparagine glycosylation sites follow: Asn5229, Asn5292, and Asn5348. One copy of the Kelch 3 repeat lies at 5247-5293 (SCFAVSGPLDNQNLGLSPFYEIGTIVWIDSNNNDKFEQPSDIGKSNV). CNA-B domains are found at residues 5291 to 5358 (SNVS…FKLT), 5394 to 5430 (LPGV…PGDY), 5502 to 5553 (LPGV…QVAQ), and 5608 to 5644 (LSDI…PGDY). A glycan (N-linked (GlcNAc...) asparagine) is linked at Asn5513. An N-linked (GlcNAc...) asparagine glycan is attached at Asn5659. CNA-B domains follow at residues 5724–5791 (SDVS…FKLT), 5827–5872 (LPGV…TPIG), 5935–5984 (LPGV…YKQV), and 6041–6077 (VEGI…PGDY). N-linked (GlcNAc...) asparagine glycosylation occurs at Asn5946. Asn6092 and Asn6155 each carry an N-linked (GlcNAc...) asparagine glycan. 4 CNA-B domains span residues 6154–6221 (SNVS…FKLT), 6257–6302 (LPGV…TPIG), 6365–6416 (LPGV…QDAQ), and 6471–6507 (LSDI…PGDY). N-linked (GlcNAc...) asparagine glycosylation is present at Asn6376. N-linked (GlcNAc...) asparagine glycosylation is found at Asn6522 and Asn6535. CNA-B domains lie at 6587–6654 (SDVS…FKLT), 6690–6726 (LEGV…PGDY), 6798–6849 (LPGV…QVNQ), and 6904–6940 (VEGI…PGDY). Asn6701, Asn6809, and Asn6848 each carry an N-linked (GlcNAc...) asparagine glycan. N-linked (GlcNAc...) asparagine glycosylation is found at Asn6954, Asn7080, Asn7137, and Asn7245. CNA-B domains follow at residues 7023–7090 (SDVS…FKLT), 7126–7171 (LAGV…TPIG), 7234–7285 (LPGV…QDAQ), 7340–7411 (LSDI…VTVK), 7456–7523 (SDVS…FKLT), 7559–7596 (LPGV…PGDY), 7668–7719 (LTGV…QVAQ), and 7774–7810 (VEGI…PGDY). Residues 7351–7372 (DGNEITNTKSGPDGKYQFEDVP) are disordered. Residues Asn7391 and Asn7404 are each glycosylated (N-linked (GlcNAc...) asparagine). The N-linked (GlcNAc...) asparagine glycan is linked to Asn7679. N-linked (GlcNAc...) asparagine glycans are attached at residues Asn7825 and Asn7837. CNA-B domains lie at 7887-7954 (SDVS…FKLT), 7990-8035 (LPGV…TPIG), 8098-8149 (LPGV…QVAQ), 8204-8265 (IPNI…FSLS), 8313-8374 (VGKS…VVDQ), 8420-8456 (LPGV…QGDY), and 8528-8587 (LPGI…PFDS). N-linked (GlcNAc...) asparagine glycans are attached at residues Asn8109 and Asn8255. N-linked (GlcNAc...) asparagine glycans are attached at residues Asn8441, Asn8539, Asn8629, Asn8636, Asn8655, Asn8693, Asn8753, Asn8811, Asn8896, Asn8930, Asn8976, Asn9023, Asn9073, Asn9087, Asn9123, Asn9137, Asn9146, Asn9149, Asn9186, Asn9297, Asn9305, Asn9349, Asn9409, Asn9419, Asn9533, Asn9543, Asn9556, Asn9601, Asn9709, Asn9718, Asn9786, Asn9839, Asn9850, Asn9867, Asn9891, Asn9941, Asn9957, Asn9989, Asn10042, Asn10096, Asn10111, Asn10174, Asn10267, Asn10315, Asn10348, Asn10360, Asn10379, Asn10394, Asn10431, Asn10477, Asn10552, Asn10581, Asn10715, Asn10786, Asn10802, Asn10943, and Asn11018. The stretch at 8592–8638 (CFDLLDKSITNANLGLIPLYNIGSDAWLDNLNNGVRRNDSLLVPNVT) is one Kelch 4 repeat. Residues 8634–8680 (VPNVTMSLYDNNGNLIETTITNSSGKYQFNDIQPGSYCVRATVPSNY) form the CNA-B 77 domain. The CNA-B 78 domain occupies 8751–8810 (LPNVTVQLYDKVSGNILAATRSDDKGGYVVPNLLPSADYCVQFEVPPGYIVVVDSDDSVT). The CNA-B 79 domain occupies 8965–9014 (LPGVSVSLFSPNGTSIANTITDENGKYAFKDQVPGSYCIKMIIPPHYQQV). The region spanning 9071-9107 (VPNITMTLLDSQGKQINSTITNANGFYQFVDVAPGNY) is the CNA-B 80 domain. The region spanning 9185 to 9220 (ANVSLSLVNTGNSEIKTTTTNSQGKYSFGQLLAGNY) is the CNA-B 81 domain. One can recognise a CNA-B 82 domain in the interval 9299–9332 (TITLTPNNTALPTQTTTTDVNGNYRFDNLVVGNY). CNA-B domains follow at residues 9407-9447 (LVNI…VVQF) and 9531-9569 (MANI…PGNY). Residues 9659–9728 (VEGITVRIYD…ATGYISIDLS (70 aa)) form the CNA-B 85 domain. One can recognise a CNA-B 86 domain in the interval 10044–10103 (TLFNADGSTPNDIFGKPIQMAVTDVNGKYSIPNVPPGSYYMTVSIPPRYIISNFTTTGLV). One can recognise a CNA-B 87 domain in the interval 10172-10236 (LPNVTVLLLN…ITPTKLVSTS (65 aa)). Residues 10313–10370 (PGNFTVQLKSANQAVNGGLTTVPIGTVVATSPVAANGSFSIPNLQLGNYTLTLIPPSG) form the CNA-B 88 domain.

The protein belongs to the serine-aspartate repeat-containing protein (SDr) family.

It is found in the secreted. This Dictyostelium discoideum (Social amoeba) protein is Colossin-A (colA).